The primary structure comprises 436 residues: Methylenetetrahydrofolate--tRNA-(uracil-5-)-methyltransferase TrmFO (436 aa).

8 to 13 lines the FAD pocket; sequence GGGLAG.

It belongs to the MnmG family. TrmFO subfamily. Requires FAD as cofactor.

The protein resides in the cytoplasm. The enzyme catalyses uridine(54) in tRNA + (6R)-5,10-methylene-5,6,7,8-tetrahydrofolate + NADH + H(+) = 5-methyluridine(54) in tRNA + (6S)-5,6,7,8-tetrahydrofolate + NAD(+). The catalysed reaction is uridine(54) in tRNA + (6R)-5,10-methylene-5,6,7,8-tetrahydrofolate + NADPH + H(+) = 5-methyluridine(54) in tRNA + (6S)-5,6,7,8-tetrahydrofolate + NADP(+). Functionally, catalyzes the folate-dependent formation of 5-methyl-uridine at position 54 (M-5-U54) in all tRNAs. This Syntrophomonas wolfei subsp. wolfei (strain DSM 2245B / Goettingen) protein is Methylenetetrahydrofolate--tRNA-(uracil-5-)-methyltransferase TrmFO.